The following is a 233-amino-acid chain: Homeobox protein EMX1 (233 aa).

Residues 135 to 194 (PKRIRTAFSPSQLLRLERAFEKNHYVVGAERKQLASSLSLSETQVKVWFQNRRTKYKRQK) constitute a DNA-binding region (homeobox). The disordered stretch occupies residues 192-233 (RQKLEEEGPDSDQKKKGSHHINRWRLATKQPNGEDIDVTSND). Basic and acidic residues predominate over residues 193 to 206 (QKLEEEGPDSDQKK).

The protein belongs to the EMX homeobox family.

Its subcellular location is the nucleus. Functionally, may function in combinations with OTX1/2 to specify cell fates in the developing central nervous system. This Xenopus tropicalis (Western clawed frog) protein is Homeobox protein EMX1 (emx1).